The following is a 276-amino-acid chain: uncharacterized protein (276 aa).

Y47 functions as the Proton donor in the catalytic mechanism. Position 110 (H110) interacts with substrate.

The protein belongs to the aldo/keto reductase family.

Its subcellular location is the cytoplasm. The protein localises to the nucleus. This is an uncharacterized protein from Schizosaccharomyces pombe (strain 972 / ATCC 24843) (Fission yeast).